The chain runs to 340 residues: Phosphate acyltransferase (340 aa).

Belongs to the PlsX family. As to quaternary structure, homodimer. Probably interacts with PlsY.

The protein localises to the cytoplasm. It carries out the reaction a fatty acyl-[ACP] + phosphate = an acyl phosphate + holo-[ACP]. It participates in lipid metabolism; phospholipid metabolism. Its function is as follows. Catalyzes the reversible formation of acyl-phosphate (acyl-PO(4)) from acyl-[acyl-carrier-protein] (acyl-ACP). This enzyme utilizes acyl-ACP as fatty acyl donor, but not acyl-CoA. The sequence is that of Phosphate acyltransferase from Pseudomonas syringae pv. syringae (strain B728a).